Reading from the N-terminus, the 480-residue chain is Siroheme synthase 2 (480 aa).

The precorrin-2 dehydrogenase /sirohydrochlorin ferrochelatase stretch occupies residues 1 to 202 (MDYLPMFARL…QDWQSAETWL (202 aa)). Residues 22–23 (EV) and 43–44 (PE) each bind NAD(+). Phosphoserine is present on Ser-126. A uroporphyrinogen-III C-methyltransferase region spans residues 214-480 (GEVVLVGAGP…GCDLKLVNLA (267 aa)). Pro-223 lines the S-adenosyl-L-methionine pocket. The active-site Proton acceptor is Asp-246. Residue Lys-268 is the Proton donor of the active site. Residues 299 to 301 (GGD), 329 to 330 (TA), Met-381, and Gly-410 each bind S-adenosyl-L-methionine.

It in the N-terminal section; belongs to the precorrin-2 dehydrogenase / sirohydrochlorin ferrochelatase family. In the C-terminal section; belongs to the precorrin methyltransferase family.

The catalysed reaction is uroporphyrinogen III + 2 S-adenosyl-L-methionine = precorrin-2 + 2 S-adenosyl-L-homocysteine + H(+). It catalyses the reaction precorrin-2 + NAD(+) = sirohydrochlorin + NADH + 2 H(+). It carries out the reaction siroheme + 2 H(+) = sirohydrochlorin + Fe(2+). Its pathway is cofactor biosynthesis; adenosylcobalamin biosynthesis; precorrin-2 from uroporphyrinogen III: step 1/1. It participates in cofactor biosynthesis; adenosylcobalamin biosynthesis; sirohydrochlorin from precorrin-2: step 1/1. The protein operates within porphyrin-containing compound metabolism; siroheme biosynthesis; precorrin-2 from uroporphyrinogen III: step 1/1. It functions in the pathway porphyrin-containing compound metabolism; siroheme biosynthesis; siroheme from sirohydrochlorin: step 1/1. Its pathway is porphyrin-containing compound metabolism; siroheme biosynthesis; sirohydrochlorin from precorrin-2: step 1/1. In terms of biological role, multifunctional enzyme that catalyzes the SAM-dependent methylations of uroporphyrinogen III at position C-2 and C-7 to form precorrin-2 via precorrin-1. Then it catalyzes the NAD-dependent ring dehydrogenation of precorrin-2 to yield sirohydrochlorin. Finally, it catalyzes the ferrochelation of sirohydrochlorin to yield siroheme. The sequence is that of Siroheme synthase 2 from Aeromonas salmonicida (strain A449).